A 546-amino-acid polypeptide reads, in one-letter code: Chaperonin GroEL (546 aa).

Residues 30–33 (TLGP), Lys-51, 87–91 (DGTTT), Gly-415, and Asp-496 each bind ATP. A disordered region spans residues 526-546 (PEPKSAPAGGMGGMGGMDGMM). Residues 534–546 (GGMGGMGGMDGMM) are compositionally biased toward gly residues.

This sequence belongs to the chaperonin (HSP60) family. Forms a cylinder of 14 subunits composed of two heptameric rings stacked back-to-back. Interacts with the co-chaperonin GroES.

It localises to the cytoplasm. The catalysed reaction is ATP + H2O + a folded polypeptide = ADP + phosphate + an unfolded polypeptide.. In terms of biological role, together with its co-chaperonin GroES, plays an essential role in assisting protein folding. The GroEL-GroES system forms a nano-cage that allows encapsulation of the non-native substrate proteins and provides a physical environment optimized to promote and accelerate protein folding. This chain is Chaperonin GroEL, found in Rhodopseudomonas palustris.